The following is a 179-amino-acid chain: Shikimate kinase (179 aa).

15-20 (GAGKTS) lines the ATP pocket. Threonine 19 serves as a coordination point for Mg(2+). 3 residues coordinate substrate: aspartate 37, arginine 61, and glycine 83. Arginine 123 contributes to the ATP binding site. Arginine 142 serves as a coordination point for substrate.

It belongs to the shikimate kinase family. Monomer. Mg(2+) is required as a cofactor.

Its subcellular location is the cytoplasm. The enzyme catalyses shikimate + ATP = 3-phosphoshikimate + ADP + H(+). The protein operates within metabolic intermediate biosynthesis; chorismate biosynthesis; chorismate from D-erythrose 4-phosphate and phosphoenolpyruvate: step 5/7. Functionally, catalyzes the specific phosphorylation of the 3-hydroxyl group of shikimic acid using ATP as a cosubstrate. The chain is Shikimate kinase from Coxiella burnetii (strain CbuG_Q212) (Coxiella burnetii (strain Q212)).